A 419-amino-acid polypeptide reads, in one-letter code: Glutamyl-tRNA reductase (419 aa).

Substrate contacts are provided by residues 50-53, S108, 113-115, and Q119; these read TCNR and ETQ. C51 serves as the catalytic Nucleophile. 188–193 lines the NADP(+) pocket; it reads GAGEMI.

Belongs to the glutamyl-tRNA reductase family. In terms of assembly, homodimer.

It carries out the reaction (S)-4-amino-5-oxopentanoate + tRNA(Glu) + NADP(+) = L-glutamyl-tRNA(Glu) + NADPH + H(+). It functions in the pathway porphyrin-containing compound metabolism; protoporphyrin-IX biosynthesis; 5-aminolevulinate from L-glutamyl-tRNA(Glu): step 1/2. Functionally, catalyzes the NADPH-dependent reduction of glutamyl-tRNA(Glu) to glutamate 1-semialdehyde (GSA). This chain is Glutamyl-tRNA reductase, found in Albidiferax ferrireducens (strain ATCC BAA-621 / DSM 15236 / T118) (Rhodoferax ferrireducens).